The following is a 226-amino-acid chain: Ribonuclease 3 (226 aa).

Residues 2–129 (IETISKTIKY…LIGAIYLDGG (128 aa)) form the RNase III domain. Glu42 is a Mg(2+) binding site. Residue Asp46 is part of the active site. Mg(2+) contacts are provided by Asn115 and Glu118. Glu118 is a catalytic residue. The region spanning 154–223 (DAKTILQEFI…ASLMLNQIKD (70 aa)) is the DRBM domain.

This sequence belongs to the ribonuclease III family. Homodimer. The cofactor is Mg(2+).

It localises to the cytoplasm. It catalyses the reaction Endonucleolytic cleavage to 5'-phosphomonoester.. Functionally, digests double-stranded RNA. Involved in the processing of primary rRNA transcript to yield the immediate precursors to the large and small rRNAs (23S and 16S). Processes some mRNAs, and tRNAs when they are encoded in the rRNA operon. Processes pre-crRNA and tracrRNA of type II CRISPR loci if present in the organism. In Ehrlichia canis (strain Jake), this protein is Ribonuclease 3.